Here is a 149-residue protein sequence, read N- to C-terminus: SsrA-binding protein (149 aa).

Residues 121-149 (GKGEHDKRDTIKDREGKREVERAMKSRSR) form a disordered region.

The protein belongs to the SmpB family.

The protein localises to the cytoplasm. Its function is as follows. Required for rescue of stalled ribosomes mediated by trans-translation. Binds to transfer-messenger RNA (tmRNA), required for stable association of tmRNA with ribosomes. tmRNA and SmpB together mimic tRNA shape, replacing the anticodon stem-loop with SmpB. tmRNA is encoded by the ssrA gene; the 2 termini fold to resemble tRNA(Ala) and it encodes a 'tag peptide', a short internal open reading frame. During trans-translation Ala-aminoacylated tmRNA acts like a tRNA, entering the A-site of stalled ribosomes, displacing the stalled mRNA. The ribosome then switches to translate the ORF on the tmRNA; the nascent peptide is terminated with the 'tag peptide' encoded by the tmRNA and targeted for degradation. The ribosome is freed to recommence translation, which seems to be the essential function of trans-translation. In Polaromonas sp. (strain JS666 / ATCC BAA-500), this protein is SsrA-binding protein.